A 338-amino-acid chain; its full sequence is DNA-directed RNA polymerase subunit alpha (338 aa).

Residues M1–E234 form an alpha N-terminal domain (alpha-NTD) region. The tract at residues F250 to Y338 is alpha C-terminal domain (alpha-CTD).

It belongs to the RNA polymerase alpha chain family. As to quaternary structure, homodimer. The RNAP catalytic core consists of 2 alpha, 1 beta, 1 beta' and 1 omega subunit. When a sigma factor is associated with the core the holoenzyme is formed, which can initiate transcription.

The enzyme catalyses RNA(n) + a ribonucleoside 5'-triphosphate = RNA(n+1) + diphosphate. Functionally, DNA-dependent RNA polymerase catalyzes the transcription of DNA into RNA using the four ribonucleoside triphosphates as substrates. The protein is DNA-directed RNA polymerase subunit alpha of Methylocella silvestris (strain DSM 15510 / CIP 108128 / LMG 27833 / NCIMB 13906 / BL2).